The chain runs to 200 residues: Recombination protein RecR (200 aa).

The C4-type zinc finger occupies 57-72 (CERCRNYAQSTLCPVC). The region spanning 80–175 (SLVCIVATPG…GVSRIAQGVP (96 aa)) is the Toprim domain.

It belongs to the RecR family.

Its function is as follows. May play a role in DNA repair. It seems to be involved in an RecBC-independent recombinational process of DNA repair. It may act with RecF and RecO. The protein is Recombination protein RecR of Alcanivorax borkumensis (strain ATCC 700651 / DSM 11573 / NCIMB 13689 / SK2).